Reading from the N-terminus, the 462-residue chain is MHAHAAHALGLRVPPPAFPRRRARPRRRPAAAVLATSAAPQRETDPRKRVVITGMGLASVFGSDVDTFYDRLLAGESGVGPIDRFDASSFPTRFAGQIRGFSSEGYIDGKNDRRLDDCIRYCILSGKKALESAGLGAGSDAHVKLDVGRAGVLVGTGMGGLSVFSDGVQNLIEKGYRKISPFFIPYAITNMGSALLAIDVGFMGPNYSISTACATSNYCFYAAANHIRRGEADIIVAGGTEAAIIPIGLGGFVACRALSQRNDDPITACRPWDKERDGFVMGEGAGVLVMESLEHAMKRDAPIIAEYLGGAVNCDAYHMTDPRADGLGVSSCITMSLRDAGVAPEEVNYINAHATSTLAGDLAEVRAIKQVFKNPSEIKINSTKSMIGHCLGAAGGLEAIATIKSITTGWVHPTINQFNPEPEVDFDTVANEKKQHEVNVGISNSFGFGGHNSVVVFAPFKP.

The N-terminal 35 residues, 1–35 (MHAHAAHALGLRVPPPAFPRRRARPRRRPAAAVLA), are a transit peptide targeting the chloroplast. The tract at residues 1-45 (MHAHAAHALGLRVPPPAFPRRRARPRRRPAAAVLATSAAPQRETD) is disordered. A compositionally biased stretch (basic residues) spans 19–29 (PRRRARPRRRP). Residues 30-39 (AAAVLATSAA) show a composition bias toward low complexity. The region spanning 47–459 (RKRVVITGMG…GHNSVVVFAP (413 aa)) is the Ketosynthase family 3 (KS3) domain. Active-site for beta-ketoacyl synthase activity residues include C213, H353, and H389.

This sequence belongs to the thiolase-like superfamily. Beta-ketoacyl-ACP synthases family. Homodimer.

It localises to the plastid. The protein resides in the chloroplast. The catalysed reaction is a fatty acyl-[ACP] + malonyl-[ACP] + H(+) = a 3-oxoacyl-[ACP] + holo-[ACP] + CO2. Its function is as follows. Catalyzes the condensation reaction of fatty acid synthesis by the addition to an acyl acceptor of two carbons from malonyl-ACP. Specific for elongation from C-10 to unsaturated C-16 and C-18 fatty acids. This Hordeum vulgare (Barley) protein is 3-oxoacyl-[acyl-carrier-protein] synthase I, chloroplastic (KAS12).